The following is a 137-amino-acid chain: ATP synthase epsilon chain (137 aa).

This sequence belongs to the ATPase epsilon chain family. F-type ATPases have 2 components, CF(1) - the catalytic core - and CF(0) - the membrane proton channel. CF(1) has five subunits: alpha(3), beta(3), gamma(1), delta(1), epsilon(1). CF(0) has three main subunits: a, b and c.

It localises to the cell inner membrane. Functionally, produces ATP from ADP in the presence of a proton gradient across the membrane. The chain is ATP synthase epsilon chain from Ruegeria sp. (strain TM1040) (Silicibacter sp.).